The primary structure comprises 326 residues: Inactive peptidyl-prolyl cis-trans isomerase FKBP6 (326 aa).

A PPIase FKBP-type domain is found at 53 to 142 (DASVLVKYSG…LFEIELLDFL (90 aa)). TPR repeat units lie at residues 170-203 (AATE…LHRR), 218-251 (LLVF…DRKN), and 252-285 (AKAL…QPFN).

The protein belongs to the FKBP6 family. In terms of assembly, interacts with HSP72/HSPA2 and CLTC. Interacts with GAPDH; leading to inhibit GAPDH catalytic activity. Interacts (via TPR repeats) with HSP90.

The protein resides in the cytoplasm. Its subcellular location is the cytosol. It is found in the nucleus. Co-chaperone required during spermatogenesis to repress transposable elements and prevent their mobilization, which is essential for the germline integrity. Acts via the piRNA metabolic process, which mediates the repression of transposable elements during meiosis by forming complexes composed of piRNAs and Piwi proteins and govern the methylation and subsequent repression of transposons. Acts as a co-chaperone via its interaction with HSP90 and is required for the piRNA amplification process, the secondary piRNA biogenesis. May be required together with HSP90 in removal of 16 nucleotide ping-pong by-products from Piwi complexes, possibly facilitating turnover of Piwi complexes. This is Inactive peptidyl-prolyl cis-trans isomerase FKBP6 (FKBP6) from Bos taurus (Bovine).